We begin with the raw amino-acid sequence, 313 residues long: Tyrosine--tRNA ligase (313 aa).

An L-tyrosine-binding site is contributed by Y32. Positions 37-45 (PSGEIHLGH) match the 'HIGH' region motif. Positions 152, 156, 159, and 174 each coordinate L-tyrosine. The 'KMSKS' region signature appears at 208–212 (KMSSS). Residue S211 coordinates ATP.

It belongs to the class-I aminoacyl-tRNA synthetase family. TyrS type 3 subfamily. Homodimer.

It localises to the cytoplasm. It carries out the reaction tRNA(Tyr) + L-tyrosine + ATP = L-tyrosyl-tRNA(Tyr) + AMP + diphosphate + H(+). Its function is as follows. Catalyzes the attachment of tyrosine to tRNA(Tyr) in a two-step reaction: tyrosine is first activated by ATP to form Tyr-AMP and then transferred to the acceptor end of tRNA(Tyr). This Methanospirillum hungatei JF-1 (strain ATCC 27890 / DSM 864 / NBRC 100397 / JF-1) protein is Tyrosine--tRNA ligase.